The following is a 369-amino-acid chain: Phenylalanine--tRNA ligase alpha subunit (369 aa).

A Mg(2+)-binding site is contributed by Glu-269.

Belongs to the class-II aminoacyl-tRNA synthetase family. Phe-tRNA synthetase alpha subunit type 1 subfamily. As to quaternary structure, tetramer of two alpha and two beta subunits. Mg(2+) serves as cofactor.

It is found in the cytoplasm. The enzyme catalyses tRNA(Phe) + L-phenylalanine + ATP = L-phenylalanyl-tRNA(Phe) + AMP + diphosphate + H(+). The chain is Phenylalanine--tRNA ligase alpha subunit from Nitrobacter winogradskyi (strain ATCC 25391 / DSM 10237 / CIP 104748 / NCIMB 11846 / Nb-255).